The primary structure comprises 416 residues: Thyroid hormone receptor alpha (416 aa).

Residues 1 to 30 (MEPISNVEDPNSSEGDEKRWPDGPKRKRKN) are disordered. The modulating stretch occupies residues 1–58 (MEPISNVEDPNSSEGDEKRWPDGPKRKRKNSTCSVKSMSALSLSVQGYIPSYLEKDEP). Over residues 15-24 (GDEKRWPDGP) the composition is skewed to basic and acidic residues. Residues Cys59, Cys62, Cys76, Cys79, Cys97, Cys103, Cys113, and Cys116 each coordinate Zn(2+). 2 NR C4-type zinc fingers span residues 59–79 (CVVC…CEGC) and 97–121 (CKYD…FRKC). A DNA-binding region (nuclear receptor) is located at residues 59–133 (CVVCGDKATG…VCMAMDLVLD (75 aa)). The 245-residue stretch at 169–413 (SEWELIRHVT…PPLFLEVFED (245 aa)) folds into the NR LBD domain. Arg234 and Ser283 together coordinate 3,3',5-triiodo-L-thyronine.

Belongs to the nuclear hormone receptor family. NR1 subfamily.

Its subcellular location is the nucleus. Its function is as follows. Nuclear hormone receptor that can act as a repressor or activator of transcription. High affinity receptor for thyroid hormones, including triiodothyronine and thyroxine. The polypeptide is Thyroid hormone receptor alpha (thra1) (Salmo salar (Atlantic salmon)).